Reading from the N-terminus, the 700-residue chain is non-specific serine/threonine protein kinase Cdc7 (700 aa).

A Protein kinase domain is found at 127–644; the sequence is FDVHSRIGNG…AEEALKHPFF (518 aa). ATP-binding positions include 133–141 and Lys-163; that span reads IGNGTFSTV. Asp-250 serves as the catalytic Proton acceptor.

Belongs to the protein kinase superfamily. Ser/Thr protein kinase family. Component of the Dbf4-dependent kinase (DDK) complex consisting of Cdc7 and the Dbf4 ortholog chif. Interacts with chif (via the processed polypeptide Chiffon-A); the interaction is direct.

It carries out the reaction L-seryl-[protein] + ATP = O-phospho-L-seryl-[protein] + ADP + H(+). The catalysed reaction is L-threonyl-[protein] + ATP = O-phospho-L-threonyl-[protein] + ADP + H(+). With respect to regulation, activated by chif. Inhibited by the synthetic compound XL413. Catalytic component of the Dbf4-dependent kinase (DDK) complex. Phosphorylates components of the pre-replication complex, including Mcm2 and, to a lesser extent, Mcm4. Phosphorylates histones, including H3 and H2B. Required for DNA replication and mitotic proliferation, including during the endoreplication and amplification stages of DNA replication in egg chamber follicle cells of the ovary. The sequence is that of non-specific serine/threonine protein kinase Cdc7 from Drosophila melanogaster (Fruit fly).